The primary structure comprises 209 residues: Large ribosomal subunit protein uL3 (209 aa).

At Q150 the chain carries N5-methylglutamine.

This sequence belongs to the universal ribosomal protein uL3 family. In terms of assembly, part of the 50S ribosomal subunit. Forms a cluster with proteins L14 and L19. In terms of processing, methylated by PrmB.

Functionally, one of the primary rRNA binding proteins, it binds directly near the 3'-end of the 23S rRNA, where it nucleates assembly of the 50S subunit. In Cronobacter sakazakii (strain ATCC BAA-894) (Enterobacter sakazakii), this protein is Large ribosomal subunit protein uL3.